Here is a 496-residue protein sequence, read N- to C-terminus: Zinc finger and SCAN domain-containing protein 5C (496 aa).

Positions 1 to 19 (MAANCTSSWSLGESCNSPG) are enriched in polar residues. Residues 1–38 (MAANCTSSWSLGESCNSPGSEPPQSMPSPATQLGNHDS) form a disordered region. One can recognise an SCAN box domain in the interval 44-126 (HVNFRMFSCP…DLLRNNRRPK (83 aa)). Disordered stretches follow at residues 149–188 (EAPA…TLPR) and 203–347 (PETT…HPSG). The span at 161–171 (VSSQRTSSVNQ) shows a compositional bias: polar residues. The segment covering 210–223 (GDPKALRPKPTLEK) has biased composition (basic and acidic residues). The segment covering 234-247 (GLTSPEPQLPNSPT) has biased composition (polar residues). Basic and acidic residues predominate over residues 253-263 (KEGKEPQKRAS). 5 consecutive C2H2-type zinc fingers follow at residues 356 to 378 (FACE…TRSH), 384 to 406 (FQCN…QRTH), 412 to 434 (YTCD…KRSH), 440 to 462 (FECK…QRIH), and 468 to 490 (HKCS…QKTH).

It localises to the nucleus. In terms of biological role, may be involved in transcriptional regulation. The polypeptide is Zinc finger and SCAN domain-containing protein 5C (Homo sapiens (Human)).